Consider the following 70-residue polypeptide: MTIIRVKENEPFEVAMRRFKRTIEKNGLLTELRAREFYEKPTAERKRKKAAAVKRHYKRIRSQTLPKKLY.

It belongs to the bacterial ribosomal protein bS21 family.

The sequence is that of Small ribosomal subunit protein bS21A from Burkholderia orbicola (strain AU 1054).